The primary structure comprises 415 residues: Histidine--tRNA ligase (415 aa).

Belongs to the class-II aminoacyl-tRNA synthetase family. Homodimer.

The protein resides in the cytoplasm. It catalyses the reaction tRNA(His) + L-histidine + ATP = L-histidyl-tRNA(His) + AMP + diphosphate + H(+). The polypeptide is Histidine--tRNA ligase (Rhodospirillum rubrum (strain ATCC 11170 / ATH 1.1.1 / DSM 467 / LMG 4362 / NCIMB 8255 / S1)).